We begin with the raw amino-acid sequence, 359 residues long: Fructose-bisphosphate aldolase (359 aa).

Ser-61 lines the D-glyceraldehyde 3-phosphate pocket. The active-site Proton donor is the Asp-109. Zn(2+) is bound by residues His-110, Asp-144, Glu-174, and His-226. Gly-227 contacts dihydroxyacetone phosphate. His-265 contributes to the Zn(2+) binding site. Residues 266 to 268 (GGS) and 287 to 290 (NIDT) contribute to the dihydroxyacetone phosphate site.

Belongs to the class II fructose-bisphosphate aldolase family. Zn(2+) is required as a cofactor.

The enzyme catalyses beta-D-fructose 1,6-bisphosphate = D-glyceraldehyde 3-phosphate + dihydroxyacetone phosphate. Its pathway is carbohydrate degradation; glycolysis; D-glyceraldehyde 3-phosphate and glycerone phosphate from D-glucose: step 4/4. Its function is as follows. Catalyzes the aldol condensation of dihydroxyacetone phosphate (DHAP or glycerone-phosphate) with glyceraldehyde 3-phosphate (G3P) to form fructose 1,6-bisphosphate (FBP) in gluconeogenesis and the reverse reaction in glycolysis. This is Fructose-bisphosphate aldolase (fba) from Borreliella burgdorferi (strain ATCC 35210 / DSM 4680 / CIP 102532 / B31) (Borrelia burgdorferi).